The primary structure comprises 426 residues: UDP-N-acetylglucosamine 1-carboxyvinyltransferase (426 aa).

22 to 23 (KN) contacts phosphoenolpyruvate. Arg-94 is a UDP-N-acetyl-alpha-D-glucosamine binding site. The Proton donor role is filled by Cys-118. Position 118 is a 2-(S-cysteinyl)pyruvic acid O-phosphothioketal (Cys-118). UDP-N-acetyl-alpha-D-glucosamine-binding positions include 123–127 (RPVDL), Asp-310, and Ile-332.

The protein belongs to the EPSP synthase family. MurA subfamily.

It localises to the cytoplasm. It carries out the reaction phosphoenolpyruvate + UDP-N-acetyl-alpha-D-glucosamine = UDP-N-acetyl-3-O-(1-carboxyvinyl)-alpha-D-glucosamine + phosphate. Its pathway is cell wall biogenesis; peptidoglycan biosynthesis. Its function is as follows. Cell wall formation. Adds enolpyruvyl to UDP-N-acetylglucosamine. The protein is UDP-N-acetylglucosamine 1-carboxyvinyltransferase of Hyphomonas neptunium (strain ATCC 15444).